We begin with the raw amino-acid sequence, 549 residues long: Plant intracellular Ras-group-related LRR protein 4 (549 aa).

Low complexity predominate over residues 119–140; that stretch reads SPSSNGSVSSRPPLPPATTTAA. The disordered stretch occupies residues 119–167; sequence SPSSNGSVSSRPPLPPATTTAARSDSQSSLNFSERAPVRPKDMVSRDDS. Over residues 141–150 the composition is skewed to polar residues; that stretch reads RSDSQSSLNF. A compositionally biased stretch (basic and acidic residues) spans 154–167; sequence APVRPKDMVSRDDS. The residue at position 167 (Ser-167) is a Phosphoserine. LRR repeat units lie at residues 245 to 268, 269 to 291, 293 to 313, 314 to 337, 339 to 360, 362 to 383, 384 to 406, 407 to 430, 432 to 454, 455 to 476, and 478 to 500; these read LSSLTSLDLSENHIVVLPNTIGGL, SSLTKLDLHSNRIGQLPESIGEL, NLVYLNLGSNQLSSLPSAFSR, LVRLEELDLSCNNLPILPESIGSL, SLKKLDVETNDIEEIPYSIGGC, SLIELRADYNKLKALPEAIGKI, TTLEILSVRYNNIRQLPTTMSSL, ASLKELDVSFNELESVPESLCFAT, LVKLNIGNNFADMVSLPRSIGNL, EMLEELDISNNQIRVLPDSFKM, and TKLRVFRAQENPLHIPPRDIAEK. A GVYW; degenerate motif is present at residues 501-508; sequence GPQAVVQY.

This sequence belongs to the SHOC2 family. As to expression, widely expressed.

Leucine-rich repeat protein that likely mediates protein interactions, possibly in the context of signal transduction. The polypeptide is Plant intracellular Ras-group-related LRR protein 4 (PIRL4) (Arabidopsis thaliana (Mouse-ear cress)).